The primary structure comprises 527 residues: Peptide chain release factor 3 (527 aa).

A tr-type G domain is found at 11–278; the sequence is AKRRTFAIIS…GFVEWAPAPL (268 aa). GTP is bound by residues 20–27, 87–91, and 141–144; these read SHPDAGKT, DTPGH, and NKMD.

Belongs to the TRAFAC class translation factor GTPase superfamily. Classic translation factor GTPase family. PrfC subfamily.

The protein resides in the cytoplasm. Functionally, increases the formation of ribosomal termination complexes and stimulates activities of RF-1 and RF-2. It binds guanine nucleotides and has strong preference for UGA stop codons. It may interact directly with the ribosome. The stimulation of RF-1 and RF-2 is significantly reduced by GTP and GDP, but not by GMP. The polypeptide is Peptide chain release factor 3 (Teredinibacter turnerae (strain ATCC 39867 / T7901)).